Here is a 118-residue protein sequence, read N- to C-terminus: Basic phospholipase A2 PA-15 (118 aa).

Intrachain disulfides connect C11/C71, C27/C117, C29/C45, C44/C98, C51/C91, C60/C84, and C78/C89. The Ca(2+) site is built by Y28, G30, and G32. Residue H48 is part of the active site. D49 is a binding site for Ca(2+). The active site involves D92.

The protein belongs to the phospholipase A2 family. Group I subfamily. D49 sub-subfamily. Requires Ca(2+) as cofactor. Expressed by the venom gland.

The protein resides in the secreted. The enzyme catalyses a 1,2-diacyl-sn-glycero-3-phosphocholine + H2O = a 1-acyl-sn-glycero-3-phosphocholine + a fatty acid + H(+). In terms of biological role, PLA2 catalyzes the calcium-dependent hydrolysis of the 2-acyl groups in 3-sn-phosphoglycerides. The sequence is that of Basic phospholipase A2 PA-15 from Pseudechis australis (Mulga snake).